Consider the following 554-residue polypeptide: Dihydroxy-acid dehydratase (554 aa).

Residue Asp-78 coordinates Mg(2+). Cys-119 contacts [2Fe-2S] cluster. Positions 120 and 121 each coordinate Mg(2+). Residue Lys-121 is modified to N6-carboxylysine. Residue Cys-191 participates in [2Fe-2S] cluster binding. Residue Glu-442 coordinates Mg(2+). The Proton acceptor role is filled by Ser-468.

It belongs to the IlvD/Edd family. In terms of assembly, homodimer. The cofactor is [2Fe-2S] cluster. Requires Mg(2+) as cofactor.

The enzyme catalyses (2R)-2,3-dihydroxy-3-methylbutanoate = 3-methyl-2-oxobutanoate + H2O. It carries out the reaction (2R,3R)-2,3-dihydroxy-3-methylpentanoate = (S)-3-methyl-2-oxopentanoate + H2O. It participates in amino-acid biosynthesis; L-isoleucine biosynthesis; L-isoleucine from 2-oxobutanoate: step 3/4. It functions in the pathway amino-acid biosynthesis; L-valine biosynthesis; L-valine from pyruvate: step 3/4. Its function is as follows. Functions in the biosynthesis of branched-chain amino acids. Catalyzes the dehydration of (2R,3R)-2,3-dihydroxy-3-methylpentanoate (2,3-dihydroxy-3-methylvalerate) into 2-oxo-3-methylpentanoate (2-oxo-3-methylvalerate) and of (2R)-2,3-dihydroxy-3-methylbutanoate (2,3-dihydroxyisovalerate) into 2-oxo-3-methylbutanoate (2-oxoisovalerate), the penultimate precursor to L-isoleucine and L-valine, respectively. This chain is Dihydroxy-acid dehydratase, found in Acetivibrio thermocellus (strain ATCC 27405 / DSM 1237 / JCM 9322 / NBRC 103400 / NCIMB 10682 / NRRL B-4536 / VPI 7372) (Clostridium thermocellum).